Reading from the N-terminus, the 567-residue chain is Low-affinity glucose transporter HXT3 (567 aa).

Residues Met-1–Met-29 are compositionally biased toward polar residues. The interval Met-1–Asn-30 is disordered. The Cytoplasmic portion of the chain corresponds to Met-1 to Gly-57. Ser-23 carries the post-translational modification Phosphoserine. A helical membrane pass occupies residues Ala-58–Trp-78. Over Asp-79–Gly-113 the chain is Extracellular. The chain crosses the membrane as a helical span at residues Leu-114–Gly-134. Residues Asp-135–Lys-140 lie on the Cytoplasmic side of the membrane. The helical transmembrane segment at Met-141 to Ile-161 threads the bilayer. Topologically, residues Asn-162–Arg-171 are extracellular. A helical membrane pass occupies residues Ile-172–Val-192. Topologically, residues Ala-193–Arg-198 are cytoplasmic. Residues Gly-199 to Thr-219 traverse the membrane as a helical segment. Residues Asn-220 to Arg-233 lie on the Extracellular side of the membrane. N-linked (GlcNAc...) asparagine glycosylation is present at Asn-225. Residues Val-234–Pro-254 traverse the membrane as a helical segment. The Cytoplasmic segment spans residues Glu-255–Asp-337. A helical membrane pass occupies residues Asn-338 to Ser-354. Residues Asp-355–Ser-360 are Extracellular-facing. The chain crosses the membrane as a helical span at residues Ile-361–Val-378. Over Asp-379–Asn-385 the chain is Cytoplasmic. The chain crosses the membrane as a helical span at residues Cys-386–Val-406. Residues Thr-407–Val-428 are Extracellular-facing. Residue Asn-416 is glycosylated (N-linked (GlcNAc...) asparagine). The helical transmembrane segment at Phe-429–Ile-449 threads the bilayer. The Cytoplasmic portion of the chain corresponds to Ser-450–Thr-466. A helical transmembrane segment spans residues Ala-467–Ile-487. Position 488 (Asn-488) is a topological domain, extracellular. The helical transmembrane segment at Phe-489–Phe-509 threads the bilayer. At Val-510–Lys-567 the chain is on the cytoplasmic side.

This sequence belongs to the major facilitator superfamily. Sugar transporter (TC 2.A.1.1) family.

The protein localises to the membrane. Its function is as follows. Low-affinity glucose transporter. The chain is Low-affinity glucose transporter HXT3 (HXT3) from Saccharomyces cerevisiae (strain ATCC 204508 / S288c) (Baker's yeast).